Here is a 186-residue protein sequence, read N- to C-terminus: Protein YABBY 2 (186 aa).

The C4-type zinc finger occupies 17 to 44; the sequence is CNFCNTIFAVSVPSNSMLNIVTVRCGHC.

The protein belongs to the YABBY family. As to expression, expressed in leaf blades, leaf sheaths and flowers.

It localises to the nucleus. This is Protein YABBY 2 (YAB2) from Oryza sativa subsp. japonica (Rice).